The sequence spans 202 residues: Probable septum site-determining protein MinC (202 aa).

It belongs to the MinC family. Interacts with MinD and FtsZ.

Cell division inhibitor that blocks the formation of polar Z ring septums. Rapidly oscillates between the poles of the cell to destabilize FtsZ filaments that have formed before they mature into polar Z rings. Prevents FtsZ polymerization. In Sulfurihydrogenibium sp. (strain YO3AOP1), this protein is Probable septum site-determining protein MinC.